The primary structure comprises 137 residues: Basic phospholipase A2 homolog bothropstoxin-I (137 aa).

The first 16 residues, 1 to 16, serve as a signal peptide directing secretion; sequence MRTLWIMAVLLVGVEG. 7 disulfides stabilise this stretch: Cys-42/Cys-131, Cys-44/Cys-60, Cys-59/Cys-111, Cys-65/Cys-137, Cys-66/Cys-104, Cys-73/Cys-97, and Cys-91/Cys-102. Positions 121–133 are important for membrane-damaging activities in eukaryotes and bacteria; heparin-binding; that stretch reads KKYRYHLKPFCKK.

It belongs to the phospholipase A2 family. Group II subfamily. K49 sub-subfamily. As to quaternary structure, homodimer; non-covalently linked (probable alternative/compact dimer conformation in solution). Binds to heparin. As to expression, expressed by the venom gland.

Its subcellular location is the secreted. Suramin inhibits both myotoxic and muscle-paralyzing activities. Chicoric acid inhibits myotoxic activity. Zinc ions inhibits the myotoxic activity and the neuromuscular blockade. Heparin inhibits myotoxic activity. Its function is as follows. Snake venom phospholipase A2 homolog that lacks enzymatic activity. Shows local myotoxic activity. Induces inflammation, since it induces edema and leukocytes infiltration. In addition, it induces NLRP3 NLRP3, ASC (PYCARD), caspase-1 (CASP1), and IL-1beta (IL1B) gene expression in the gastrocnemius muscle, showing that it is able to activate NLRP3 inflammasome. It also damages artificial and myoblast membranes by a calcium-independent mechanism, has bactericidal activity, and induces neuromuscular blockade. A model of myotoxic mechanism has been proposed: an apo Lys49-PLA2 is activated by the entrance of a hydrophobic molecule (e.g. fatty acid) at the hydrophobic channel of the protein leading to a reorientation of a monomer. This reorientation causes a transition between 'inactive' to 'active' states, causing alignment of C-terminal and membrane-docking sites (MDoS) side-by-side and putting the membrane-disruption sites (MDiS) in the same plane, exposed to solvent and in a symmetric position for both monomers. The MDoS region stabilizes the toxin on membrane by the interaction of charged residues with phospholipid head groups. Subsequently, the MDiS region destabilizes the membrane with penetration of hydrophobic residues. This insertion causes a disorganization of the membrane, allowing an uncontrolled influx of ions (i.e. calcium and sodium), and eventually triggering irreversible intracellular alterations and cell death. The sequence is that of Basic phospholipase A2 homolog bothropstoxin-I from Bothrops jararacussu (Jararacussu).